We begin with the raw amino-acid sequence, 388 residues long: Spermosin (388 aa).

The N-terminal stretch at 1–22 is a signal peptide; the sequence is MAAINVIFISGAIALFALTGSC. Residues 29 to 49 are compositionally biased toward polar residues; it reads FTNKPYATQNPYSPPQTNQPT. A disordered region spans residues 29–98; sequence FTNKPYATQN…SENSESENSE (70 aa). The span at 54 to 64 shows a compositional bias: pro residues; it reads QPGPAPTPAPY. 5 disulfide bridges follow: Cys116-Cys251, Cys163-Cys179, Cys265-Cys330, Cys295-Cys310, and Cys320-Cys349. Positions 130-372 constitute a Peptidase S1 domain; the sequence is IVGGAEAVPN…NLEWLCCYMP (243 aa). Active-site charge relay system residues include His178 and Asp231. Ser324 (charge relay system) is an active-site residue.

It belongs to the peptidase S1 family. In terms of assembly, heterodimer of a heavy chain and either an L1 light chain or an L2 light chain linked by a disulfide bond. As to expression, detected in sperm, but not in unfertilized eggs (at protein level). Expressed in gonad, but not in hepatopancreas, intestine or branchial basket.

It localises to the secreted. The catalysed reaction is Hydrolyzes arginyl bonds, preferably with Pro in the P2 position.. Its activity is regulated as follows. Inhibited by peptidyl-argininals with Pro in the P2 position, diisopropyl fluorophosphate, phenylmethanesulfonyl fluoride, leupeptin, antipain, soybean trypsin inhibitor, aprotinin, ovomucoid, valyl-prolyl-arginyl-chloromethane, glycyl-valyl-arginyl-chloromethane, p-aminobenzamidine, benzamidine, zinc chloride and mercuric chloride. Functionally, trypsin-like protease with a narrow substrate specificity. Preferentially hydrolyzes substrates with Pro in the P2 position and Val in the P3 position. Plays a role in fertilization. This Halocynthia roretzi (Sea squirt) protein is Spermosin.